The chain runs to 137 residues: Glutamyl-tRNA(Gln) amidotransferase subunit C, chloroplastic/mitochondrial (137 aa).

It belongs to the GatC family. In terms of assembly, subunit of the heterotrimeric GatCAB amidotransferase (AdT) complex, composed of A, B and C subunits.

Its subcellular location is the mitochondrion. The protein localises to the plastid. The protein resides in the chloroplast. The catalysed reaction is L-glutamyl-tRNA(Gln) + L-glutamine + ATP + H2O = L-glutaminyl-tRNA(Gln) + L-glutamate + ADP + phosphate + H(+). In terms of biological role, allows the formation of correctly charged Gln-tRNA(Gln) through the transamidation of misacylated Glu-tRNA(Gln) in chloroplasts and mitochondria. The reaction takes place in the presence of glutamine and ATP through an activated gamma-phospho-Glu-tRNA(Gln). This is Glutamyl-tRNA(Gln) amidotransferase subunit C, chloroplastic/mitochondrial from Vitis vinifera (Grape).